A 470-amino-acid polypeptide reads, in one-letter code: Sorting nexin-17 (470 aa).

The 109-residue stretch at 1–109 (MHFSIPETES…SFLRRAQQET (109 aa)) folds into the PX domain. A 1,2-diacyl-sn-glycero-3-phospho-(1D-myo-inositol-3-phosphate) contacts are provided by Arg36, Ser38, Lys62, and Arg75. One can recognise a Ras-associating domain in the interval 115–206 (EEVSLEVLLS…YKIVLRKSYW (92 aa)). An FERM-like region spans residues 115–432 (EEVSLEVLLS…DATRESMVKL (318 aa)). Residues 270–432 (GYLRFDACVA…DATRESMVKL (163 aa)) are PTB-like F3 module. Phosphoserine occurs at positions 336, 407, 409, 415, 421, 437, and 440. Residues 400-425 (VGGTLRRSDSQQAVKSPPLLESPDAT) are disordered.

Belongs to the sorting nexin family. As to quaternary structure, monomer. Interacts with APP (via cytoplasmic YXNPXY motif). Interacts with KIF1B. Interacts with the C-termini of P-selectin, PTC, LDLR, VLDLR, LRP1 and LRP8. Interacts with KRIT1 (via N-terminus). Interacts with HRAS. Interacts with ITGB1 and ITGB5 (via NPxY motif). Interacts with CCDC22 and CCDC93; the interaction associates SNX17 with the CCC complex. Interacts (via C-terminus) with VPS26C and VPS35L; the interactions are direct and associate SNX17 with the retriever complex.

It is found in the cytoplasm. The protein localises to the early endosome. The protein resides in the cytoplasmic vesicle membrane. Its function is as follows. Critical regulator of endosomal recycling of numerous surface proteins, including integrins, signaling receptor and channels. Binds to NPxY sequences in the cytoplasmic tails of target cargos. Associates with retriever and CCC complexes to prevent lysosomal degradation and promote cell surface recycling of numerous cargos such as integrins ITGB1, ITGB5 and their associated alpha subunits. Also required for maintenance of normal cell surface levels of APP and LRP1. Interacts with membranes containing phosphatidylinositol 3-phosphate (PtdIns(3P)). The protein is Sorting nexin-17 (SNX17) of Pongo abelii (Sumatran orangutan).